Here is a 229-residue protein sequence, read N- to C-terminus: Cytidylate kinase (229 aa).

An ATP-binding site is contributed by 12-20; that stretch reads GPSGSGKGT.

Belongs to the cytidylate kinase family. Type 1 subfamily.

The protein localises to the cytoplasm. It carries out the reaction CMP + ATP = CDP + ADP. The enzyme catalyses dCMP + ATP = dCDP + ADP. The chain is Cytidylate kinase from Pseudomonas fluorescens (strain SBW25).